The chain runs to 294 residues: StAR-related lipid transfer protein 3 (294 aa).

The MENTAL domain occupies 1–66 (DGYICNNGMD…YSPPESLAGS (66 aa)). The FFAT motif lies at 55–61 (QFYSPPE). The segment at 58 to 77 (SPPESLAGSEEDLDEEGLGR) is disordered. The START domain maps to 79–292 (AVSPQEKALV…LRQRIRDLRS (214 aa)).

Belongs to the STARD3 family. In terms of assembly, homodimer. Phosphorylated. Phosphorylation allows the tethering of two membranes that participates in the formation of ER-endosome contacts. Phosphorylation of FFAT motif drives membrane tethering between the endoplasmic reticulum and late endosomes that in turn allows the efficient transport of sterol mediated by the START domain.

The protein localises to the late endosome membrane. The catalysed reaction is cholesterol(in) = cholesterol(out). Its function is as follows. Sterol-binding protein that mediates cholesterol transport from the endoplasmic reticulum to endosomes. The sterol transport mechanism is triggered by phosphorylation of FFAT motif that leads to membrane tethering between the endoplasmic reticulum and late endosomes. Acts as a lipid transfer protein that redirects sterol to the endosome at the expense of the cell membrane and favors membrane formation inside endosomes. This chain is StAR-related lipid transfer protein 3, found in Salvelinus fontinalis (Brook trout).